The chain runs to 983 residues: Inner tegument protein (983 aa).

The segment at 474–983 (LNVNTHFAVQ…TSVSLPPASP (510 aa)) is interaction with large tegument protein. Residues 901–932 (APWESAPQPPRLRMTPDTDHEESTAGATSVPE) are disordered. Basic and acidic residues predominate over residues 914–923 (MTPDTDHEES).

This sequence belongs to the herpesviridae inner tegument protein family. Interacts (via C-terminus) with the large tegument protein/LTP (via N-terminus).

The protein localises to the virion tegument. It is found in the host cytoplasm. It localises to the host nucleus. The protein resides in the host Golgi apparatus. Its subcellular location is the host trans-Golgi network. Its function is as follows. Plays an essential role in cytoplasmic secondary envelopment during viral egress. Interacts with the capsid via the large tegument protein/LTP and participates in its transport to the host trans-Golgi network (TGN) where secondary envelopment occurs. Modulates tegumentation and capsid accumulation at the viral assembly complex. The polypeptide is Inner tegument protein (UL47) (Homo sapiens (Human)).